The sequence spans 503 residues: Maturase K (503 aa).

Belongs to the intron maturase 2 family. MatK subfamily.

Its subcellular location is the plastid. The protein resides in the chloroplast. In terms of biological role, usually encoded in the trnK tRNA gene intron. Probably assists in splicing its own and other chloroplast group II introns. The chain is Maturase K from Backhousia myrtifolia (Grey myrtle).